A 199-amino-acid polypeptide reads, in one-letter code: Large ribosomal subunit protein bL25 (199 aa).

Belongs to the bacterial ribosomal protein bL25 family. CTC subfamily. As to quaternary structure, part of the 50S ribosomal subunit; part of the 5S rRNA/L5/L18/L25 subcomplex. Contacts the 5S rRNA. Binds to the 5S rRNA independently of L5 and L18.

Functionally, this is one of the proteins that binds to the 5S RNA in the ribosome where it forms part of the central protuberance. This is Large ribosomal subunit protein bL25 from Rickettsia akari (strain Hartford).